The chain runs to 274 residues: Undecaprenyl-diphosphatase (274 aa).

The next 8 helical transmembrane spans lie at 9-29 (LEYL…FIPV), 47-67 (PGAS…AWYF), 95-115 (ILIG…FVPY), 120-140 (VLRS…FMYL), 161-181 (LIGF…GITI), 197-217 (FSFL…FISS), 224-244 (LGFF…LLAI), and 254-274 (NGLK…LLNL).

It belongs to the UppP family.

Its subcellular location is the cell inner membrane. The catalysed reaction is di-trans,octa-cis-undecaprenyl diphosphate + H2O = di-trans,octa-cis-undecaprenyl phosphate + phosphate + H(+). Catalyzes the dephosphorylation of undecaprenyl diphosphate (UPP). Confers resistance to bacitracin. The chain is Undecaprenyl-diphosphatase from Prochlorococcus marinus (strain AS9601).